The primary structure comprises 145 residues: [Ribosomal protein bS18]-alanine N-acetyltransferase (145 aa).

Positions 1–145 constitute an N-acetyltransferase domain; sequence MIETIVEQDF…ENAVIMALYL (145 aa). Acetyl-CoA is bound at residue 67-69; sequence LAV. Glu-101 (proton acceptor) is an active-site residue. Residue Asn-106 participates in acetyl-CoA binding. The active-site Proton donor is Tyr-113.

This sequence belongs to the acetyltransferase family. RimI subfamily.

The protein resides in the cytoplasm. It catalyses the reaction N-terminal L-alanyl-[ribosomal protein bS18] + acetyl-CoA = N-terminal N(alpha)-acetyl-L-alanyl-[ribosomal protein bS18] + CoA + H(+). In terms of biological role, acetylates the N-terminal alanine of ribosomal protein bS18. The sequence is that of [Ribosomal protein bS18]-alanine N-acetyltransferase from Haemophilus ducreyi (strain 35000HP / ATCC 700724).